Consider the following 703-residue polypeptide: Glycogen [starch] synthase, liver (703 aa).

The residue at position 8 (S8) is a Phosphoserine; by PKA. S11 carries the phosphoserine modification. K40 is a binding site for UDP. Residues H205 and R211 each coordinate UDP-alpha-D-glucose. Alpha-D-glucose 6-phosphate contacts are provided by H291, E292, Q294, H297, and K301. R331 is a UDP binding site. R331 contributes to the UDP-alpha-D-glucose binding site. H501 contacts alpha-D-glucose 6-phosphate. The UDP-alpha-D-glucose site is built by E510, W512, and G513. Residue T515 coordinates UDP. Alpha-D-glucose 6-phosphate is bound by residues R582 and R586. Residue S627 is modified to Phosphoserine. The disordered stretch occupies residues 628-703 (PPTTEGFKYP…KKKLHGEYKN (76 aa)). S641, S645, S649, and S653 each carry phosphoserine; by GSK3-alpha and GSK3-beta. A compositionally biased stretch (low complexity) spans 647–657 (SGSQASSPQSS). Residue S657 is modified to Phosphoserine; by CK2. Over residues 658–674 (DVEDEVEDERYDEEEEA) the composition is skewed to acidic residues. Position 683 is a phosphoserine (S683).

Belongs to the glycosyltransferase 3 family. In terms of assembly, part of the glycogen synthase (GS)-glycogenin complex, a heterooctamer composed of a tetramer of GS and 2 dimers of glycogenin, where each GS protomer binds to one glycogenin subunit (via glycogenin C-terminus); the GS tetramer may dissociate from glycogenin dimers to continue glycogen polymerization on its own. May also form a heterooctamer complex with GYG1 (via GYG1 C-terminus). Primed phosphorylation at Ser-657 (site 5) by CSNK2A1 and CSNK2A2 is required for inhibitory phosphorylation at Ser-641 (site 3a), Ser-645 (site 3b), Ser-649 (site 3c) and Ser-653 (site 4) by GSK3A an GSK3B. Dephosphorylation at Ser-641 and Ser-645 by PP1 activates the enzyme. Phosphorylation at Ser-8 is not required for interaction with GYG1. Interaction with GYG1 does not regulate the phosphorylation at Ser-8 and Ser-641. Specifically expressed in liver (at protein level).

It catalyses the reaction [(1-&gt;4)-alpha-D-glucosyl](n) + UDP-alpha-D-glucose = [(1-&gt;4)-alpha-D-glucosyl](n+1) + UDP + H(+). It functions in the pathway glycan biosynthesis; glycogen biosynthesis. Allosteric activation by glucose-6-phosphate. Phosphorylation reduces the activity towards UDP-glucose. When in the non-phosphorylated state, glycogen synthase does not require glucose-6-phosphate as an allosteric activator; when phosphorylated it does. Its function is as follows. Glycogen synthase participates in the glycogen biosynthetic process along with glycogenin and glycogen branching enzyme. Extends the primer composed of a few glucose units formed by glycogenin by adding new glucose units to it. In this context, glycogen synthase transfers the glycosyl residue from UDP-Glc to the non-reducing end of alpha-1,4-glucan. In Homo sapiens (Human), this protein is Glycogen [starch] synthase, liver.